Consider the following 230-residue polypeptide: 2-amino-5-formylamino-6-ribosylaminopyrimidin-4(3H)-one 5'-monophosphate deformylase (230 aa).

Fe cation is bound by residues Glu-29, His-31, Asp-40, and His-109.

Belongs to the creatininase superfamily. FAPy deformylase family. As to quaternary structure, homodimer. It depends on Fe(2+) as a cofactor. The cofactor is Zn(2+).

The catalysed reaction is 2-amino-5-formylamino-6-(5-phospho-D-ribosylamino)pyrimidin-4(3H)-one + H2O = 2,5-diamino-6-(1-D-ribosylamino)pyrimidin-4(3H)-one 5'-phosphate + formate + H(+). It participates in cofactor biosynthesis; coenzyme F420 biosynthesis. It functions in the pathway cofactor biosynthesis; riboflavin biosynthesis. Its function is as follows. Catalyzes the hydrolysis of the formamide of 2-amino-5-formylamino-6-ribosylamino-4(3H)-pyrimidinone 5'-monophosphate (FAPy) to form 2,5-diamino-6-ribosylamino-4(3H)-pyrimidinone 5'-phosphate (APy). In Methanobrevibacter smithii (strain ATCC 35061 / DSM 861 / OCM 144 / PS), this protein is 2-amino-5-formylamino-6-ribosylaminopyrimidin-4(3H)-one 5'-monophosphate deformylase.